Consider the following 565-residue polypeptide: Augmin complex subunit dgt3 (565 aa).

2 coiled-coil regions span residues 135 to 171 and 212 to 241; these read ELQL…AKKA and QDYD…IQFY.

The protein belongs to the HAUS3 family. In terms of assembly, component of the augmin complex composed of dgt2, dgt3, dgt4, dgt5, dgt6, msd1, msd5 and wac. The complex interacts directly or indirectly with microtubules and is required for centrosome-independent generation of spindle microtubules.

It localises to the cytoplasm. It is found in the cytoskeleton. The protein resides in the spindle. In terms of biological role, as part of the augmin complex, plays a role in centrosome-independent generation of spindle microtubules. The complex is required for mitotic spindle assembly through its involvement in localizing gamma-tubulin to spindle microtubules. The polypeptide is Augmin complex subunit dgt3 (Drosophila melanogaster (Fruit fly)).